Here is a 345-residue protein sequence, read N- to C-terminus: 1-aminocyclopropane-1-carboxylate oxidase homolog 7 (345 aa).

Lysine 16 participates in a covalent cross-link: Glycyl lysine isopeptide (Lys-Gly) (interchain with G-Cter in ubiquitin). A Fe2OG dioxygenase domain is found at 194 to 293 (KGLHMICHYY…RISIACFFSS (100 aa)). Histidine 218, aspartate 220, and histidine 274 together coordinate Fe cation. Arginine 284 serves as a coordination point for 2-oxoglutarate.

It belongs to the iron/ascorbate-dependent oxidoreductase family. The cofactor is Fe(2+).

The protein is 1-aminocyclopropane-1-carboxylate oxidase homolog 7 of Arabidopsis thaliana (Mouse-ear cress).